The sequence spans 921 residues: Ribosome-releasing factor 2, mitochondrial (921 aa).

Residues 1 to 55 (MVSALLLRARQNGRAARCLDYPKVKCWALASLPKSSLEKPGFSQVRRFSVFHPQS) constitute a mitochondrion transit peptide. Positions 60 to 368 (DLTRNIGIIA…SVVDLLPSPQ (309 aa)) constitute a tr-type G domain. Residues 69–76 (AHIDAGKT), 152–156 (DTPGH), and 206–209 (NKMD) each bind GTP.

It belongs to the TRAFAC class translation factor GTPase superfamily. Classic translation factor GTPase family. EF-G/EF-2 subfamily.

It localises to the mitochondrion. In terms of biological role, mitochondrial GTPase that mediates the disassembly of ribosomes from messenger RNA at the termination of mitochondrial protein biosynthesis. Not involved in the GTP-dependent ribosomal translocation step during translation elongation. This chain is Ribosome-releasing factor 2, mitochondrial (mef2), found in Emericella nidulans (strain FGSC A4 / ATCC 38163 / CBS 112.46 / NRRL 194 / M139) (Aspergillus nidulans).